Reading from the N-terminus, the 214-residue chain is Cell division protein SepF (214 aa).

Positions 25 to 51 are disordered; sequence EDDDRGARAGGYSRRPREDRFEEEAYG.

The protein belongs to the SepF family. Homodimer. Interacts with FtsZ.

Its subcellular location is the cytoplasm. Its function is as follows. Cell division protein that is part of the divisome complex and is recruited early to the Z-ring. Probably stimulates Z-ring formation, perhaps through the cross-linking of FtsZ protofilaments. Its function overlaps with FtsA. The sequence is that of Cell division protein SepF from Mycolicibacterium smegmatis (strain ATCC 700084 / mc(2)155) (Mycobacterium smegmatis).